Here is a 267-residue protein sequence, read N- to C-terminus: Strigolactone esterase RMS3 (267 aa).

S96 functions as the Nucleophile in the catalytic mechanism. Active-site residues include D218 and H247.

It belongs to the AB hydrolase superfamily.

Its subcellular location is the cytoplasm. It localises to the nucleus. Its function is as follows. Involved in strigolactone signaling pathway. Functions downstream of strigolactone synthesis, as a component of hormone signaling and as an enzyme that participates in the conversion of strigolactones to the bioactive form. Binds and hydrolyzes the synthetic strigolactone analog GR24 and its enantiomers in vitro. Forms a stable covalent complex with the D-ring of strigolactone, which is essential for hormone bioactivity. The D-ring is attached to His-247 of the catalytic triad. The hydrolysis of strigolactone into a covalently linked intermediate molecule is required to trigger strigolactone signaling. This mechanism defines RMS3 as a non-canonical hormone receptor with dual functions to generate and sense the active form of strigolactone. Strigolactones are hormones that inhibit tillering and shoot branching through the MAX-dependent pathway, contribute to the regulation of shoot architectural response to phosphate-limiting conditions and function as rhizosphere signal that stimulates hyphal branching of arbuscular mycorrhizal fungi and trigger seed germination of root parasitic weeds. In Pisum sativum (Garden pea), this protein is Strigolactone esterase RMS3.